The primary structure comprises 510 residues: Kynurenine 3-monooxygenase (510 aa).

Belongs to the aromatic-ring hydroxylase family. KMO subfamily. Requires FAD as cofactor.

The protein localises to the mitochondrion outer membrane. The enzyme catalyses L-kynurenine + NADPH + O2 + H(+) = 3-hydroxy-L-kynurenine + NADP(+) + H2O. Its pathway is cofactor biosynthesis; NAD(+) biosynthesis; quinolinate from L-kynurenine: step 1/3. In terms of biological role, catalyzes the hydroxylation of L-kynurenine (L-Kyn) to form 3-hydroxy-L-kynurenine (L-3OHKyn). Required for synthesis of quinolinic acid. This chain is Kynurenine 3-monooxygenase (bna4), found in Aspergillus oryzae (strain ATCC 42149 / RIB 40) (Yellow koji mold).